A 131-amino-acid chain; its full sequence is Protein anoxia up-regulated (131 aa).

Positions 1–24 (MVYESGFTTRRTYSSRPVTTSYAV) are enriched in polar residues. The segment at 1–121 (MVYESGFTTR…STTSGNLPGG (121 aa)) is disordered. Composition is skewed to low complexity over residues 44 to 53 (SSDYSYTSKS) and 98 to 116 (TSTTGAGPGGYSYSSTTSG).

As to expression, concentrated in lamina neurons, first optic lobe neurons and cortical neurons of central brain.

In terms of biological role, plays an important role in the regulation of tissue responsiveness to oxygen deprivation. The polypeptide is Protein anoxia up-regulated (Drosophila melanogaster (Fruit fly)).